Here is a 105-residue protein sequence, read N- to C-terminus: MEHPAYTLSLLTTAGGLMGYYRKGSIPSLVSGLVFGSVYGIAGYLLHMNRDGGLEMALGASTLLLGAGVIRGMPSRFTKPVPVVLTALGGLGSYYYYNKYKEFYP.

The next 3 membrane-spanning stretches (helical) occupy residues 26-46, 53-73, and 77-97; these read IPSLVSGLVFGSVYGIAGYLL, GLEMALGASTLLLGAGVIRGM, and FTKPVPVVLTALGGLGSYYYY.

The protein belongs to the TMEM14 family.

Its subcellular location is the mitochondrion. The protein localises to the membrane. This chain is TMEM14 protein homolog YJR085C, found in Saccharomyces cerevisiae (strain ATCC 204508 / S288c) (Baker's yeast).